Here is a 491-residue protein sequence, read N- to C-terminus: MYRVRSMESTATSSPSSSLMVHPTNFRVIIVGGSIAGLTLAHCLSKIGVDYVILEKRQQIAPQEGASIGILPHGGRILDQLGLFNAIQRNVEPLTTAHISYPNGFTHTNQSPTLIHERFGLPLAFLERRKLLQILYWSLPDTSRVQVGKTVVSVDHIWGDSGMAVRTRDGSTFYGDIVVGADGVHSRVRHEMWRLAEIDLPGSITEREKDGMTVDYICVFGISASVPDLRPGEQVASLHDGRSFLVFPGKDGRVFWFLLKKLDRRYTYTSAPRLTPLDIDTIAGSFISDHIWNGVSFGSLWERREVTGVTNLEENVFSTWHSGRIVCIGDSMHKMAPNTGQGANCAIEDAAALANAIHGAIEHVDRPSMAEVQSFLRSFNESRLPRVREIYKSASVVVRLHARENLALRLVGRYYLPYSGDVPANTASKLIADGVQLSFLAPSLHSGPGWEKYSMKNGVAKSTVVWTSLGILGLVVFLFLLFRVRARFSSF.

FAD-binding residues include Glu55, Gly69, Arg128, Asp330, and Ala343. An N-linked (GlcNAc...) asparagine glycan is attached at Asn380. Residues 462–482 (STVVWTSLGILGLVVFLFLLF) traverse the membrane as a helical segment.

Belongs to the paxM FAD-dependent monooxygenase family. Requires FAD as cofactor.

It localises to the membrane. It participates in secondary metabolite biosynthesis; terpenoid biosynthesis. FAD-dependent monooxygenase; part of the cluster A that mediates the biosynthesis of chevalone E and its oxidized derivatives that possess a unique five-membered lactone ring and can synergistically enhance the cytotoxicity of doxorubicin (DOX) in breast cancer cells. Within the pathway, cle3 takes part to the biosynthesis of the molecular scaffold by catalyzing the formation of an (S)-epoxide ring at the terminal olefin of the geranylgeranyl group. The molecular scaffold is commonly biosynthesized by a series of enzymes including the non-reducing polyketide synthase (NR-PKS) cle1 that produces the alpha-pyrone triacetic acid lactone (TAL); The membrane-bound prenyltransferase cle5 that accepts TAL as its substrate to perform a C-3 geranylgeranylation reaction, in which the pathway-dedicated GGPS cle6 is required to provide GGPP, the other substrate of cle5; the FAD-dependent monooxygenase Cle3 that forms an (S)-epoxide ring at the terminal olefin of the geranylgeranyl group; and the terpene cyclase Cle7 that catalyzes the cyclization of the prenyl group that yields the pentacyclic pathway intermediate chevalone E. Chevalone E can derivatize into seven new oxidized analogs by the cytochrome P450 monooxygenases cle2 (acting at C-20) and cle4 (acting at C-11 and C-12). In Aspergillus versicolor, this protein is FAD-dependent monooxygenase cle3.